Reading from the N-terminus, the 251-residue chain is Ribosome maturation factor RimP (251 aa).

Residues 176–251 (SLRRGSAPPQ…ARLKNRDTLH (76 aa)) form a disordered region. A compositionally biased stretch (acidic residues) spans 186–196 (DGEEGDEEEGA). A compositionally biased stretch (basic and acidic residues) spans 216 to 226 (PKLDKKSDKPV).

It belongs to the RimP family.

The protein resides in the cytoplasm. Its function is as follows. Required for maturation of 30S ribosomal subunits. The protein is Ribosome maturation factor RimP of Methylorubrum extorquens (strain PA1) (Methylobacterium extorquens).